The following is a 357-amino-acid chain: Biotin synthase (357 aa).

The interval 1–27 is disordered; that stretch reads MTTAETKPATETGENAGTTGTAGTAAT. Low complexity predominate over residues 9–27; it reads ATETGENAGTTGTAGTAAT. In terms of domain architecture, Radical SAM core spans 78 to 303; the sequence is DAVEMEGIIS…RQLLRFAGGR (226 aa). [4Fe-4S] cluster is bound by residues Cys93, Cys97, and Cys100. Cys136, Cys228, and Arg298 together coordinate [2Fe-2S] cluster.

This sequence belongs to the radical SAM superfamily. Biotin synthase family. Homodimer. [4Fe-4S] cluster is required as a cofactor. The cofactor is [2Fe-2S] cluster.

It carries out the reaction (4R,5S)-dethiobiotin + (sulfur carrier)-SH + 2 reduced [2Fe-2S]-[ferredoxin] + 2 S-adenosyl-L-methionine = (sulfur carrier)-H + biotin + 2 5'-deoxyadenosine + 2 L-methionine + 2 oxidized [2Fe-2S]-[ferredoxin]. The protein operates within cofactor biosynthesis; biotin biosynthesis; biotin from 7,8-diaminononanoate: step 2/2. Its function is as follows. Catalyzes the conversion of dethiobiotin (DTB) to biotin by the insertion of a sulfur atom into dethiobiotin via a radical-based mechanism. In Corynebacterium jeikeium (strain K411), this protein is Biotin synthase.